We begin with the raw amino-acid sequence, 308 residues long: Reaction center protein M chain (308 aa).

The next 3 helical transmembrane spans lie at 54–80, 111–140, and 143–168; these read GSLG…YQAG, KEGG…RAQA, and MGKH…RPIL. Positions 183 and 203 each coordinate (7R,8Z)-bacteriochlorophyll b. Residues 198-226 traverse the membrane as a helical segment; the sequence is FYNPFHGLSIAFLYGSALLFAMHGATILA. 2 residues coordinate Fe cation: His-220 and Glu-235. An a ubiquinone-binding site is contributed by Trp-253. Residues 260 to 286 traverse the membrane as a helical segment; sequence NATMEGIHRWAIWMAVLVTLTGGIGIL. His-267 provides a ligand contact to Fe cation.

This sequence belongs to the reaction center PufL/M/PsbA/D family. Reaction center is composed of four bacteriochlorophylls, two bacteriopheophytins, two ubiquinones, one iron, and three highly hydrophobic polypeptide chains (designated L, M, and H).

The protein localises to the cellular chromatophore membrane. The reaction center is a membrane-bound complex that mediates the initial photochemical event in the electron transfer process of photosynthesis. The chain is Reaction center protein M chain (pufM) from Cereibacter sphaeroides (strain ATCC 17023 / DSM 158 / JCM 6121 / CCUG 31486 / LMG 2827 / NBRC 12203 / NCIMB 8253 / ATH 2.4.1.) (Rhodobacter sphaeroides).